Consider the following 262-residue polypeptide: 2-keto-4-pentenoate hydratase 2 (262 aa).

Belongs to the hydratase/decarboxylase family. MhpD subfamily. The cofactor is a divalent metal cation.

It carries out the reaction (S)-4-hydroxy-2-oxopentanoate = (2Z)-2-hydroxypenta-2,4-dienoate + H2O. It functions in the pathway aromatic compound metabolism; 3-phenylpropanoate degradation. Functionally, catalyzes the conversion of 2-hydroxypentadienoic acid (enolic form of 2-oxopent-4-enoate) to 4-hydroxy-2-ketopentanoic acid. This is 2-keto-4-pentenoate hydratase 2 from Dechloromonas aromatica (strain RCB).